The following is a 1926-amino-acid chain: Rho GTPase-activating protein 21-A (1926 aa).

A disordered region spans residues 1-41 (MATRRAIVPEQQQEPSSPASEISKNKDGQEQSEMVSPMEEE). Positions 10–22 (EQQQEPSSPASEI) are enriched in polar residues. Residues 77–162 (HTSIKDEENG…TLELSVMPKD (86 aa)) form the PDZ domain. Disordered regions lie at residues 211 to 236 (VEVPPSGTSLAKQQSSRPVRTATTQP), 353 to 378 (PTAQAEGSPSPTNHYSSPGPHQQIDW), 416 to 487 (TDYN…RSES), 571 to 592 (QPTRQNSYRSPHPRPAVSDRSG), 640 to 704 (FQRK…DSDA), and 868 to 905 (GKLGLKQGSSLKGVQARENVPSSEDSESRKDSSSDVFS). 3 stretches are compositionally biased toward polar residues: residues 216-236 (SGTSLAKQQSSRPVRTATTQP), 353-372 (PTAQAEGSPSPTNHYSSPGP), and 416-429 (TDYNQMLPNHFSGQ). A compositionally biased stretch (low complexity) spans 441 to 451 (QQSVQMRQRSV). Basic and acidic residues predominate over residues 452–466 (SQERLEDPVLMKEWP). The segment covering 468–479 (SASQDTLSSAVA) has biased composition (polar residues). A compositionally biased stretch (polar residues) spans 640–669 (FQRKTQTESASGFQLDSVKTSMSASSSPPA). The 114-residue stretch at 906-1019 (DSNKEGFLYF…WIKAIQENGN (114 aa)) folds into the PH domain. Residues 1044–1064 (MSSASNKSEQSPKAPRQTLSI) show a composition bias toward polar residues. Positions 1044–1107 (MSSASNKSEQ…SPPKDKGSWR (64 aa)) are disordered. Residues 1083–1105 (PKQESERRLFSKDDISPPKDKGS) show a composition bias toward basic and acidic residues. The region spanning 1126 to 1318 (VRLDDCPPAH…TLIQKHDWFF (193 aa)) is the Rho-GAP domain. 6 disordered regions span residues 1330-1381 (VHEE…SGKD), 1396-1416 (ASRKRKKPKDKPQPSSSEDEL), 1512-1540 (QMEESMSDSGTMLSNSSQASAQRSKPKVV), 1573-1598 (LDPNPISPEVQSVAESKGEEADDERS), 1626-1658 (RQHRSKEEDPPRNVQANAEGSPSCTEGSITPRL), and 1827-1915 (STSE…LSGT). Residues 1512–1534 (QMEESMSDSGTMLSNSSQASAQR) show a composition bias toward polar residues. 2 stretches are compositionally biased toward polar residues: residues 1639-1653 (VQANAEGSPSCTEGS) and 1866-1902 (TADIPTGSESPSLGTAPQSDDQMNGDSFQSKNKNNFS).

The protein resides in the golgi apparatus membrane. Its subcellular location is the cell junction. The protein localises to the cytoplasmic vesicle membrane. It is found in the cytoplasm. It localises to the cytoskeleton. Its function is as follows. GTPase-activating protein (GAP) for rhoa and cdc42. This Xenopus laevis (African clawed frog) protein is Rho GTPase-activating protein 21-A (arhgap21-a).